The primary structure comprises 360 residues: Phospho-N-acetylmuramoyl-pentapeptide-transferase (360 aa).

10 helical membrane passes run 26–46 (AIVS…RMIA), 72–92 (PTMG…LWAY), 94–114 (SNPY…IGFV), 132–152 (WKYF…YLAG), 168–188 (VMPQ…VGTG), 199–219 (GLAI…AWAT), 236–256 (AGEL…FLWF), 263–283 (VFMG…IAVL), 288–308 (FLLV…ILQV), and 338–358 (VIVR…ATLK).

Belongs to the glycosyltransferase 4 family. MraY subfamily. Mg(2+) is required as a cofactor.

The protein resides in the cell inner membrane. It catalyses the reaction UDP-N-acetyl-alpha-D-muramoyl-L-alanyl-gamma-D-glutamyl-meso-2,6-diaminopimeloyl-D-alanyl-D-alanine + di-trans,octa-cis-undecaprenyl phosphate = di-trans,octa-cis-undecaprenyl diphospho-N-acetyl-alpha-D-muramoyl-L-alanyl-D-glutamyl-meso-2,6-diaminopimeloyl-D-alanyl-D-alanine + UMP. It functions in the pathway cell wall biogenesis; peptidoglycan biosynthesis. In terms of biological role, catalyzes the initial step of the lipid cycle reactions in the biosynthesis of the cell wall peptidoglycan: transfers peptidoglycan precursor phospho-MurNAc-pentapeptide from UDP-MurNAc-pentapeptide onto the lipid carrier undecaprenyl phosphate, yielding undecaprenyl-pyrophosphoryl-MurNAc-pentapeptide, known as lipid I. In Klebsiella pneumoniae subsp. pneumoniae (strain ATCC 700721 / MGH 78578), this protein is Phospho-N-acetylmuramoyl-pentapeptide-transferase.